The following is a 416-amino-acid chain: Succinate--CoA ligase [ADP-forming] subunit beta (416 aa).

The transit peptide at 1 to 14 (MLRMAPKTVGAVRN) directs the protein to the hydrogenosome. ATP-binding positions include Lys-64, 71 to 73 (GRG), and Glu-132. Mg(2+) contacts are provided by Asn-224 and Asp-242. Substrate is bound by residues Asn-293 and 350–352 (GIM).

The protein belongs to the succinate/malate CoA ligase beta subunit family. As to quaternary structure, heterodimer of an alpha and a beta subunit. Requires Mg(2+) as cofactor.

It is found in the hydrogenosome. The catalysed reaction is succinate + ATP + CoA = succinyl-CoA + ADP + phosphate. It participates in carbohydrate metabolism; tricarboxylic acid cycle; succinate from succinyl-CoA (ligase route): step 1/1. Functionally, succinyl-CoA synthetase functions in the citric acid cycle (TCA), coupling the hydrolysis of succinyl-CoA to the synthesis of ATP and thus represents the only step of substrate-level phosphorylation in the TCA. The beta subunit provides nucleotide specificity of the enzyme and binds the substrate succinate, while the binding sites for coenzyme A and phosphate are found in the alpha subunit. The polypeptide is Succinate--CoA ligase [ADP-forming] subunit beta (SCSb) (Blastocystis sp. subtype 1 (strain ATCC 50177 / NandII)).